The sequence spans 79 residues: Neurotoxin ShK-like1 (79 aa).

An N-terminal signal peptide occupies residues 1–25 (MSRKLLAVLMVCTFFLIAASMGTNA). Positions 26–35 (LPFHEGIERR) are excised as a propeptide. Residues 39–78 (CVDKMPFVCMRKDIPAICKNRNHRSYAFIMDVCRKTCGQC) enclose the ShKT domain. 3 cysteine pairs are disulfide-bonded: Cys-39-Cys-78, Cys-47-Cys-71, and Cys-56-Cys-75.

In terms of tissue distribution, expressed in nematocytes (in planulae and primary polyps). Is localized predominantly in the body column nematocytes and not in the tentacles (in primary polyps).

Its subcellular location is the nematocyst. The protein resides in the secreted. In terms of biological role, neurotoxin. In vivo, induces contraction paralysis followed by death (within 2 hours) on zebrafish larvae. Also induces body contraction in Nematostella 11-dpf polyps. This is Neurotoxin ShK-like1 from Nematostella vectensis (Starlet sea anemone).